Here is a 467-residue protein sequence, read N- to C-terminus: Argininosuccinate lyase (467 aa).

The protein belongs to the lyase 1 family. Argininosuccinate lyase subfamily.

The protein resides in the cytoplasm. The catalysed reaction is 2-(N(omega)-L-arginino)succinate = fumarate + L-arginine. It functions in the pathway amino-acid biosynthesis; L-arginine biosynthesis; L-arginine from L-ornithine and carbamoyl phosphate: step 3/3. The polypeptide is Argininosuccinate lyase (Rhizobium etli (strain ATCC 51251 / DSM 11541 / JCM 21823 / NBRC 15573 / CFN 42)).